The following is a 230-amino-acid chain: Ribosomal RNA small subunit methyltransferase G (230 aa).

S-adenosyl-L-methionine-binding positions include Gly91, Leu96, 142–143 (VE), and Arg161.

It belongs to the methyltransferase superfamily. RNA methyltransferase RsmG family.

The protein resides in the cytoplasm. It catalyses the reaction guanosine(527) in 16S rRNA + S-adenosyl-L-methionine = N(7)-methylguanosine(527) in 16S rRNA + S-adenosyl-L-homocysteine. Its function is as follows. Specifically methylates the N7 position of guanine in position 527 of 16S rRNA. The protein is Ribosomal RNA small subunit methyltransferase G of Burkholderia pseudomallei (strain K96243).